Consider the following 1558-residue polypeptide: Hybrid PKS-NRPS synthetase TAS1 (1558 aa).

The segment at Tyr-27–Val-392 is condensation (C) domain. Positions Thr-522 to Thr-919 are adenylation (A) domain. The tract at residues Thr-995–Ala-1028 is disordered. The 78-residue stretch at Ser-1027–Glu-1104 folds into the Carrier domain. Ser-1063 bears the O-(pantetheine 4'-phosphoryl)serine mark. The tract at residues Leu-1116–Arg-1144 is disordered. A compositionally biased stretch (polar residues) spans Gln-1131–Pro-1140. Positions Lys-1145–Ser-1558 constitute a Ketosynthase family 3 (KS3) domain. Active-site for beta-ketoacyl synthase activity residues include Cys-1308, His-1444, and Asn-1484.

This sequence in the N-terminal section; belongs to the NRP synthetase family. It depends on pantetheine 4'-phosphate as a cofactor.

It carries out the reaction acetoacetyl-CoA + L-isoleucine + ATP = tenuazonic acid + AMP + diphosphate + CoA + 2 H(+). Its function is as follows. Hybrid PKS-NRPS synthetase that mediates the biosynthesis of the toxin tenuazonic acid (TeA), an inhibitor of protein biosynthesis on ribosomes by suppressing the release of new protein. TAS1 alone is sufficient for TeA synthesis via the condensation of isoleucine (Ile) with acetoacetyl-CoA by the N-terminal NRPS module and subsequent cyclization conducted by the C-terminal KS domain. This chain is Hybrid PKS-NRPS synthetase TAS1, found in Gloeophyllum trabeum (strain ATCC 11539 / FP-39264 / Madison 617) (Brown rot fungus).